Reading from the N-terminus, the 247-residue chain is Adenosylcobinamide-GDP ribazoletransferase (247 aa).

5 helical membrane-spanning segments follow: residues Met-1 to Phe-21, Leu-37 to Leu-57, Val-61 to Gly-81, Ala-109 to Val-129, and Val-176 to Ile-196.

The protein belongs to the CobS family. Requires Mg(2+) as cofactor.

Its subcellular location is the cell inner membrane. The enzyme catalyses alpha-ribazole + adenosylcob(III)inamide-GDP = adenosylcob(III)alamin + GMP + H(+). The catalysed reaction is alpha-ribazole 5'-phosphate + adenosylcob(III)inamide-GDP = adenosylcob(III)alamin 5'-phosphate + GMP + H(+). The protein operates within cofactor biosynthesis; adenosylcobalamin biosynthesis; adenosylcobalamin from cob(II)yrinate a,c-diamide: step 7/7. In terms of biological role, joins adenosylcobinamide-GDP and alpha-ribazole to generate adenosylcobalamin (Ado-cobalamin). Also synthesizes adenosylcobalamin 5'-phosphate from adenosylcobinamide-GDP and alpha-ribazole 5'-phosphate. The sequence is that of Adenosylcobinamide-GDP ribazoletransferase from Geotalea daltonii (strain DSM 22248 / JCM 15807 / FRC-32) (Geobacter daltonii).